Here is a 255-residue protein sequence, read N- to C-terminus: Hemin import ATP-binding protein HmuV (255 aa).

The ABC transporter domain occupies 2–238 (LRAHNLHIRR…ESLKAVFGLE (237 aa)). Residue 34 to 41 (GPNGAGKS) coordinates ATP.

This sequence belongs to the ABC transporter superfamily. Heme (hemin) importer (TC 3.A.1.14.5) family. In terms of assembly, the complex is composed of two ATP-binding proteins (HmuV), two transmembrane proteins (HmuU) and a solute-binding protein (HmuT).

It localises to the cell inner membrane. Its function is as follows. Part of the ABC transporter complex HmuTUV involved in hemin import. Responsible for energy coupling to the transport system. The sequence is that of Hemin import ATP-binding protein HmuV from Pseudomonas fluorescens (strain Pf0-1).